Consider the following 254-residue polypeptide: 14-3-3 protein 2 (254 aa).

It belongs to the 14-3-3 family. Homodimer.

In Solanum lycopersicum (Tomato), this protein is 14-3-3 protein 2 (TFT2).